A 61-amino-acid polypeptide reads, in one-letter code: Photosystem II assembly protein Psb34 (61 aa).

Residues 36 to 56 form a helical membrane-spanning segment; the sequence is LIMAAITVVLVAGLIAVAVVA.

It belongs to the Psb34 family. Part of the photosystem II (PSII) assembly intermediate RC47 complex (with D1, D2, CP47, PsbE, PsbF, PsbH, Psb27 and Psb28); minor amounts are found in other PSII complexes, including mature, dimeric PSII with PsbO and PsbV. No HliA or HliB are detected in any of these complexes. Its interaction with PSII requires both CP47 (psbB) and PsbH. HliA/HliB and Psb34 probably bind to a similar site on CP47; their binding seems to be mutually exclusive.

The protein localises to the cellular thylakoid membrane. Functionally, involved in photosystem II (PSII) assembly and/or repair. Probably involved in conversion of late PSII assembly intermediates into mature dimeric PSII, it may mediate the optimal equlibrium of HliA/HliB among the intermediates containing CP47 (psbB) to facilitate photoprotection during assembly. The sequence is that of Photosystem II assembly protein Psb34 from Synechocystis sp. (strain ATCC 27184 / PCC 6803 / Kazusa).